Consider the following 313-residue polypeptide: tRNA pseudouridine synthase B (313 aa).

The active-site Nucleophile is the aspartate 42.

Belongs to the pseudouridine synthase TruB family. Type 1 subfamily.

It catalyses the reaction uridine(55) in tRNA = pseudouridine(55) in tRNA. In terms of biological role, responsible for synthesis of pseudouridine from uracil-55 in the psi GC loop of transfer RNAs. This is tRNA pseudouridine synthase B from Prochlorococcus marinus (strain SARG / CCMP1375 / SS120).